Consider the following 497-residue polypeptide: Acetyl-coenzyme A carboxylase carboxyl transferase subunit beta, chloroplastic (497 aa).

The CoA carboxyltransferase N-terminal domain maps to 230 to 497 (LWIQCENCYG…FFPLNQNSIK (268 aa)). Residues C234, C237, C253, and C256 each coordinate Zn(2+). The C4-type zinc finger occupies 234–256 (CENCYGLNYKKFFRSKMNICEQC).

It belongs to the AccD/PCCB family. Acetyl-CoA carboxylase is a heterohexamer composed of biotin carboxyl carrier protein, biotin carboxylase and 2 subunits each of ACCase subunit alpha and ACCase plastid-coded subunit beta (accD). Requires Zn(2+) as cofactor.

Its subcellular location is the plastid. It is found in the chloroplast stroma. It carries out the reaction N(6)-carboxybiotinyl-L-lysyl-[protein] + acetyl-CoA = N(6)-biotinyl-L-lysyl-[protein] + malonyl-CoA. Its pathway is lipid metabolism; malonyl-CoA biosynthesis; malonyl-CoA from acetyl-CoA: step 1/1. Its function is as follows. Component of the acetyl coenzyme A carboxylase (ACC) complex. Biotin carboxylase (BC) catalyzes the carboxylation of biotin on its carrier protein (BCCP) and then the CO(2) group is transferred by the transcarboxylase to acetyl-CoA to form malonyl-CoA. The chain is Acetyl-coenzyme A carboxylase carboxyl transferase subunit beta, chloroplastic from Platanus occidentalis (Sycamore).